Here is a 502-residue protein sequence, read N- to C-terminus: ATP synthase subunit alpha (502 aa).

Residue 169 to 176 (GDRQTGKT) participates in ATP binding.

The protein belongs to the ATPase alpha/beta chains family. In terms of assembly, F-type ATPases have 2 components, CF(1) - the catalytic core - and CF(0) - the membrane proton channel. CF(1) has five subunits: alpha(3), beta(3), gamma(1), delta(1), epsilon(1). CF(0) has three main subunits: a(1), b(2) and c(9-12). The alpha and beta chains form an alternating ring which encloses part of the gamma chain. CF(1) is attached to CF(0) by a central stalk formed by the gamma and epsilon chains, while a peripheral stalk is formed by the delta and b chains.

Its subcellular location is the cell membrane. It catalyses the reaction ATP + H2O + 4 H(+)(in) = ADP + phosphate + 5 H(+)(out). In terms of biological role, produces ATP from ADP in the presence of a proton gradient across the membrane. The alpha chain is a regulatory subunit. In Exiguobacterium sibiricum (strain DSM 17290 / CCUG 55495 / CIP 109462 / JCM 13490 / 255-15), this protein is ATP synthase subunit alpha.